A 179-amino-acid polypeptide reads, in one-letter code: Peptidyl-tRNA hydrolase (179 aa).

Residue Y15 participates in tRNA binding. H20 functions as the Proton acceptor in the catalytic mechanism. Residues Y66, N68, and N114 each coordinate tRNA.

The protein belongs to the PTH family. As to quaternary structure, monomer.

Its subcellular location is the cytoplasm. It carries out the reaction an N-acyl-L-alpha-aminoacyl-tRNA + H2O = an N-acyl-L-amino acid + a tRNA + H(+). Functionally, hydrolyzes ribosome-free peptidyl-tRNAs (with 1 or more amino acids incorporated), which drop off the ribosome during protein synthesis, or as a result of ribosome stalling. Catalyzes the release of premature peptidyl moieties from peptidyl-tRNA molecules trapped in stalled 50S ribosomal subunits, and thus maintains levels of free tRNAs and 50S ribosomes. The polypeptide is Peptidyl-tRNA hydrolase (Chlamydia trachomatis serovar L2b (strain UCH-1/proctitis)).